The primary structure comprises 134 residues: Larval cuticle protein A3A (134 aa).

Copy 1 of the repeat occupies A23–V26. The segment at D38–G80 is disordered. A Chitin-binding type R&amp;R domain is found at H40–A106. Residues A111 to A114 form repeat 2.

Its function is as follows. Component of the cuticle of the larva of Tenebrio molitor. This Tenebrio molitor (Yellow mealworm beetle) protein is Larval cuticle protein A3A.